The primary structure comprises 613 residues: Protein ECM3 (613 aa).

Transmembrane regions (helical) follow at residues 10 to 30, 74 to 94, 106 to 126, and 143 to 163; these read IWASVRPIIKIYLIIGVGFGL, GIICLTSVILFATGLGFAFIV, GGILAGGMFPNISDLPIAYLQ, and VANVIIFLAMFLICVFNLGGF. Positions 177-256 are disordered; sequence DEENTLTNDD…PAIDDRSSNS (80 aa). 2 stretches are compositionally biased toward polar residues: residues 187–206 and 213–226; these read SAQQPTQPIEGNSSSSSNQD and ESTVPNSSQASYIS. Phosphoserine is present on residues S291 and S338. Residues 345-366 form a disordered region; it reads RRRKSSISSQGAPSVLQADGTI. The next 4 helical transmembrane spans lie at 432–452, 471–491, 546–566, and 587–607; these read MAVILALIIAFIPWVKALFVT, FIMDFTSYVGAASVPFGLILL, MLLFVTAITWNLPTMTTLIYF, and FLMLQYPLMVVSLPFLVSYFI.

The protein localises to the endoplasmic reticulum membrane. In terms of biological role, may be involved in cell wall organization and biogenesis. The sequence is that of Protein ECM3 (ECM3) from Saccharomyces cerevisiae (strain ATCC 204508 / S288c) (Baker's yeast).